Reading from the N-terminus, the 706-residue chain is MSCVHNNTSFPVQTEAYLKEVFEKYKELQESKDTSLTARFARALKYYQFLIYTAFSDPKFGIGQGENTRGLLIYHQMGMGKTILSLSLAISLSHIYNPILIAPKSLHSNFQQSLLKLIKLLYPETTDHSKELQKISRRFRFVSLDAYNMGQQIIKAGGSLNGCLLIVDEAHNLFRGIINSANDKTNARQLYNNIMQAKNIRILFLTGTPCSKDPFEMVPCFNMLSGRILLPLHYERFYTAYVNKTTNSPLNADKLLNRLVGMISYAGNQNELNKLFPTELPLIIEKVEMSPEQYRQYLLARDVENAEKHASSGMYEKINAAALCLPGSEQESGSSYYVRSRMISIFASEMLTVKEDEKLSEAVQQLPKEAFTENSSPKIVCMLKNIKTSPGPVLIYSQFVELGLHVVARFLEIEGYQCLQPLKVLEEGHNTILLHKDGKDLMVKNFAEDGPTRTLVLSSKITRFTLITGKILSKERDMIQQLWNSPLNIHGEVIKILLVSKTGAEGLDLKYGRQVHILEPYWDKAREDQVKARIIRIGSHDALPPEEKTVQPFLYIAVANQKMFYSIPEGSQEQKTIDERFHERGLEKSHLNSAFRDLLKRAAIECAFNGESGCLMCQPTNALLFHENFERDLRLPNPCQPLVKAEVKAYSISYEGKQFFYQKNKDVGLGYTFYEYNPIIKAYIEIKPSNPLYIKLIKHVQAGTTA.

The region spanning 62–227 (IGQGENTRGL…VPCFNMLSGR (166 aa)) is the Helicase ATP-binding domain. ATP is bound at residue 75 to 82 (HQMGMGKT). The DEAH box motif lies at 168 to 171 (DEAH). The region spanning 417 to 599 (QCLQPLKVLE…HLNSAFRDLL (183 aa)) is the Helicase C-terminal domain.

The protein belongs to the DEAD box helicase family. DEAH subfamily. In terms of assembly, part of the viral DNA-directed RNA polymerase that consists of 8 polII-like subunits (RPB1, RPB2, RPB3, RPB5, RPB6, RPB7, RPB9, RPB10), a capping enzyme and a termination factor.

Its subcellular location is the virion. In terms of biological role, putative DNA-dependent ATPase required for providing the needed energy to achieve the termination of early transcripts. The polypeptide is Termination factor NPH-I homolog (African swine fever virus (isolate Warthog/Namibia/Wart80/1980) (ASFV)).